The chain runs to 180 residues: Large ribosomal subunit protein uL5 (180 aa).

This sequence belongs to the universal ribosomal protein uL5 family. In terms of assembly, part of the 50S ribosomal subunit; part of the 5S rRNA/L5/L18/L25 subcomplex. Contacts the 5S rRNA and the P site tRNA. Forms a bridge to the 30S subunit in the 70S ribosome.

Functionally, this is one of the proteins that bind and probably mediate the attachment of the 5S RNA into the large ribosomal subunit, where it forms part of the central protuberance. In the 70S ribosome it contacts protein S13 of the 30S subunit (bridge B1b), connecting the 2 subunits; this bridge is implicated in subunit movement. Contacts the P site tRNA; the 5S rRNA and some of its associated proteins might help stabilize positioning of ribosome-bound tRNAs. This is Large ribosomal subunit protein uL5 from Heliobacterium modesticaldum (strain ATCC 51547 / Ice1).